A 101-amino-acid chain; its full sequence is Apolipoprotein C-II (101 aa).

The signal sequence occupies residues M1–A22. The segment at A66–M74 is lipid binding. Positions S78–Q101 are lipoprotein lipase cofactor.

This sequence belongs to the apolipoprotein C2 family. Proapolipoprotein C-II is synthesized as a sialic acid containing glycoprotein which is subsequently desialylated prior to its proteolytic processing. Post-translationally, proapolipoprotein C-II, the major form found in plasma undergoes proteolytic cleavage of its N-terminal hexapeptide to generate apolipoprotein C-II, which occurs as the minor form in plasma.

It is found in the secreted. Functionally, component of chylomicrons, very low-density lipoproteins (VLDL), low-density lipoproteins (LDL), and high-density lipoproteins (HDL) in plasma. Plays an important role in lipoprotein metabolism as an activator of lipoprotein lipase. Both proapolipoprotein C-II and apolipoprotein C-II can activate lipoprotein lipase. The sequence is that of Apolipoprotein C-II (APOC2) from Tupaia glis (Common tree shrew).